The following is a 218-amino-acid chain: Methylthioribulose-1-phosphate dehydratase (218 aa).

The Zn(2+) site is built by H107 and H109.

It belongs to the aldolase class II family. MtnB subfamily. The cofactor is Zn(2+).

The enzyme catalyses 5-(methylsulfanyl)-D-ribulose 1-phosphate = 5-methylsulfanyl-2,3-dioxopentyl phosphate + H2O. It functions in the pathway amino-acid biosynthesis; L-methionine biosynthesis via salvage pathway; L-methionine from S-methyl-5-thio-alpha-D-ribose 1-phosphate: step 2/6. Its function is as follows. Catalyzes the dehydration of methylthioribulose-1-phosphate (MTRu-1-P) into 2,3-diketo-5-methylthiopentyl-1-phosphate (DK-MTP-1-P). This Xylella fastidiosa (strain M12) protein is Methylthioribulose-1-phosphate dehydratase.